A 288-amino-acid polypeptide reads, in one-letter code: MFKDFFNRSSKKKKYVTVSDSKQSDVPAGIMTKCPKCKKIMYTKELAENLNVCFNCDHHIALTAHNRIEAISDEGTFTEFDKGMTSANPLDFPSYEEKIQKDQQKTGLNEAVVTGTAQLDGMTFGVAVMDARFRMGSMGSVLGEKICRIIEHCTENRLPFILFSASGGARMQEGIISLMQMGKTSVSLKRHADAGLLYISYITNPTTGGVSASFASVGDINISEPKALIGFAGRRVIEQTINEKLPDDFQTAEFLLEHGQLDKVVHRKEMKATLSNILKMHQEVKTNA.

Residues 30–288 (IMTKCPKCKK…KMHQEVKTNA (259 aa)) enclose the CoA carboxyltransferase N-terminal domain. Zn(2+) contacts are provided by Cys-34, Cys-37, Cys-53, and Cys-56. The segment at 34-56 (CPKCKKIMYTKELAENLNVCFNC) adopts a C4-type zinc-finger fold.

This sequence belongs to the AccD/PCCB family. In terms of assembly, acetyl-CoA carboxylase is a heterohexamer composed of biotin carboxyl carrier protein (AccB), biotin carboxylase (AccC) and two subunits each of ACCase subunit alpha (AccA) and ACCase subunit beta (AccD). Requires Zn(2+) as cofactor.

It localises to the cytoplasm. The enzyme catalyses N(6)-carboxybiotinyl-L-lysyl-[protein] + acetyl-CoA = N(6)-biotinyl-L-lysyl-[protein] + malonyl-CoA. It participates in lipid metabolism; malonyl-CoA biosynthesis; malonyl-CoA from acetyl-CoA: step 1/1. Functionally, component of the acetyl coenzyme A carboxylase (ACC) complex. Biotin carboxylase (BC) catalyzes the carboxylation of biotin on its carrier protein (BCCP) and then the CO(2) group is transferred by the transcarboxylase to acetyl-CoA to form malonyl-CoA. This is Acetyl-coenzyme A carboxylase carboxyl transferase subunit beta from Staphylococcus saprophyticus subsp. saprophyticus (strain ATCC 15305 / DSM 20229 / NCIMB 8711 / NCTC 7292 / S-41).